The chain runs to 570 residues: Interleukin-1 receptor accessory protein (570 aa).

The first 20 residues, 1 to 20 (MTLLWCVVSLYFYGILQSDA), serve as a signal peptide directing secretion. 3 consecutive Ig-like C2-type domains span residues 21–128 (SERC…VAFP), 136–226 (SCFN…FHLT), and 242–350 (PPVI…VKQK). Residues 21-367 (SERCDDWGLD…VELACGFGAT (347 aa)) are Extracellular-facing. 5 cysteine pairs are disulfide-bonded: cysteine 24/cysteine 122, cysteine 47/cysteine 114, cysteine 137/cysteine 181, cysteine 160/cysteine 212, and cysteine 266/cysteine 332. Asparagine 57 is a glycosylation site (N-linked (GlcNAc...) asparagine). Residues 69–85 (IWYWTRQDRDLEEPINF) are essential for interaction with PTPRD. 3 N-linked (GlcNAc...) asparagine glycosylation sites follow: asparagine 107, asparagine 111, and asparagine 118. 3 N-linked (GlcNAc...) asparagine glycosylation sites follow: asparagine 196, asparagine 209, and asparagine 299. Residues 368-388 (VLLVVILIVVYHVYWLEMVLF) traverse the membrane as a helical segment. Residues 389–570 (YRAHFGTDET…GLSYSSLKNV (182 aa)) are Cytoplasmic-facing. The 144-residue stretch at 403–546 (KEYDIYVSYA…RFWKQLQVAM (144 aa)) folds into the TIR domain. Glutamate 482 is an active-site residue. A disordered region spans residues 549 to 570 (KKSPRRSSSDEQGLSYSSLKNV). A Phosphoserine modification is found at serine 557. A compositionally biased stretch (polar residues) spans 558 to 570 (DEQGLSYSSLKNV).

Belongs to the interleukin-1 receptor family. In terms of assembly, the interleukin-36 receptor complex is a heterodimer of IL1RL2 and IL1RAP; the association is inhibited by IL36RN. The interleukin-1 receptor complex is a heterodimer of IL1R1 and IL1RAP. Associates with IL1R2 to form a non-signaling interleukin-1 receptor complex. Interacts with IL-33-bound IL1RL1 to form the minimal interleukin-33 signaling complex with a 1:1:1 stoichiometry. Interacts with KIT (independently of stimulation with KITLG/SCF). A mast cell-specific KITLG/SCF-induced interleukin-33 signaling complex contains IL1RL1, IL1RAP, KIT and MYD88. Interacts (via the first immunoglobilin domain) with PTPRD (via the third immunoglobilin domain); induces pre- and postsynaptic differentiation of neurons.

Its subcellular location is the cell membrane. The protein localises to the secreted. The catalysed reaction is NAD(+) + H2O = ADP-D-ribose + nicotinamide + H(+). Functionally, coreceptor for IL1RL2 in the IL-36 signaling system. Coreceptor with IL1R1 in the IL-1 signaling system. Associates with IL1R1 bound to IL1B to form the high affinity interleukin-1 receptor complex which mediates interleukin-1-dependent activation of NF-kappa-B and other pathways. Signaling involves the recruitment of adapter molecules such as TOLLIP, MYD88, and IRAK1 or IRAK2 via the respective TIR domains of the receptor/coreceptor subunits. Recruits TOLLIP to the signaling complex. Does not bind to interleukin-1 alone; binding of IL1RN to IL1R1, prevents its association with IL1R1 to form a signaling complex. The cellular response is modulated through a non-signaling association with the membrane IL1R2 decoy receptor. Coreceptor for IL1RL1 in the IL-33 signaling system. Can bidirectionally induce pre- and postsynaptic differentiation of neurons by trans-synaptically binding to PTPRD. May play a role in IL1B-mediated costimulation of IFNG production from T-helper 1 (Th1) cells. Its function is as follows. Associates with secreted ligand-bound IL1R2 and increases the affinity of secreted IL1R2 for IL1B; this complex formation may be the dominant mechanism for neutralization of IL1B by secreted/soluble receptors. Enhances the ability of secreted IL1R1 to inhibit IL-33 signaling. In Macaca mulatta (Rhesus macaque), this protein is Interleukin-1 receptor accessory protein (IL1RAP).